A 761-amino-acid chain; its full sequence is Ribonucleoside-diphosphate reductase subunit alpha (761 aa).

In terms of domain architecture, ATP-cone spans 5–95; it reads LFVTKRNGKI…IFHLRKKAFG (91 aa). ATP is bound by residues Lys-9, 15-21, Thr-55, and Lys-91; that span reads ELINLDK. GDP is bound at residue Thr-209. A disulfide bond links Cys-225 and Cys-462. Residues 232-234, Arg-262, and Arg-269 contribute to the dTTP site; that span reads DNL. GDP is bound at residue Asn-437. Catalysis depends on Asn-437, which acts as the Proton acceptor. The active-site Cysteine radical intermediate is the Cys-439. Residues Glu-441 and 623-625 each bind GDP; that span reads ETS. Residue Glu-441 is the Proton acceptor of the active site.

This sequence belongs to the ribonucleoside diphosphate reductase large chain family. In terms of assembly, tetramer of two alpha and two beta subunits.

The catalysed reaction is a 2'-deoxyribonucleoside 5'-diphosphate + [thioredoxin]-disulfide + H2O = a ribonucleoside 5'-diphosphate + [thioredoxin]-dithiol. Under complex allosteric control mediated by deoxynucleoside triphosphates and ATP binding to separate specificity and activation sites on the alpha subunit. The type of nucleotide bound at the specificity site determines substrate preference. It seems probable that ATP makes the enzyme reduce CDP and UDP, dGTP favors ADP reduction and dTTP favors GDP reduction. Stimulated by ATP and inhibited by dATP binding to the activity site. Its function is as follows. Provides the precursors necessary for DNA synthesis. Catalyzes the biosynthesis of deoxyribonucleotides from the corresponding ribonucleotides. The polypeptide is Ribonucleoside-diphosphate reductase subunit alpha (nrdA) (Buchnera aphidicola subsp. Baizongia pistaciae (strain Bp)).